The chain runs to 78 residues: D-alanyl carrier protein (78 aa).

Positions 1–78 (MAFRENVLEI…MIITQLEALK (78 aa)) constitute a Carrier domain. Residue Ser36 is modified to O-(pantetheine 4'-phosphoryl)serine.

It belongs to the DltC family. 4'-phosphopantetheine is transferred from CoA to a specific serine of apo-DCP.

The protein resides in the cytoplasm. Its pathway is cell wall biogenesis; lipoteichoic acid biosynthesis. In terms of biological role, carrier protein involved in the D-alanylation of lipoteichoic acid (LTA). The loading of thioester-linked D-alanine onto DltC is catalyzed by D-alanine--D-alanyl carrier protein ligase DltA. The DltC-carried D-alanyl group is further transferred to cell membrane phosphatidylglycerol (PG) by forming an ester bond, probably catalyzed by DltD. D-alanylation of LTA plays an important role in modulating the properties of the cell wall in Gram-positive bacteria, influencing the net charge of the cell wall. The polypeptide is D-alanyl carrier protein (Listeria innocua serovar 6a (strain ATCC BAA-680 / CLIP 11262)).